Here is a 498-residue protein sequence, read N- to C-terminus: Serine hydroxymethyltransferase, mitochondrial (498 aa).

Residue Lys273 is modified to N6-(pyridoxal phosphate)lysine.

Belongs to the SHMT family. As to quaternary structure, homotetramer. The cofactor is pyridoxal 5'-phosphate.

Its subcellular location is the mitochondrion. It carries out the reaction (6R)-5,10-methylene-5,6,7,8-tetrahydrofolate + glycine + H2O = (6S)-5,6,7,8-tetrahydrofolate + L-serine. It functions in the pathway one-carbon metabolism; tetrahydrofolate interconversion. Functionally, interconversion of serine and glycine. This is Serine hydroxymethyltransferase, mitochondrial (SHM1) from Kluyveromyces lactis (strain ATCC 8585 / CBS 2359 / DSM 70799 / NBRC 1267 / NRRL Y-1140 / WM37) (Yeast).